The following is a 162-amino-acid chain: UPF0114 protein Pput_0713 (162 aa).

The next 4 helical transmembrane spans lie at 15-35 (LLAP…LKFF), 53-73 (LILV…LVMV), 109-126 (VAAS…RVFM), and 136-156 (LMWY…MGYL).

Belongs to the UPF0114 family.

The protein localises to the cell membrane. The polypeptide is UPF0114 protein Pput_0713 (Pseudomonas putida (strain ATCC 700007 / DSM 6899 / JCM 31910 / BCRC 17059 / LMG 24140 / F1)).